A 101-amino-acid chain; its full sequence is Putative regulatory protein Csac_2087 (101 aa).

Belongs to the RemA family.

In Caldicellulosiruptor saccharolyticus (strain ATCC 43494 / DSM 8903 / Tp8T 6331), this protein is Putative regulatory protein Csac_2087.